Reading from the N-terminus, the 122-residue chain is Small ribosomal subunit protein uS13 (122 aa).

Residues 96–122 (LPVRGQRTKTNSRTRKGKRKTIAGKKK) form a disordered region. Basic residues predominate over residues 101-122 (QRTKTNSRTRKGKRKTIAGKKK).

This sequence belongs to the universal ribosomal protein uS13 family. In terms of assembly, part of the 30S ribosomal subunit. Forms a loose heterodimer with protein S19. Forms two bridges to the 50S subunit in the 70S ribosome.

Functionally, located at the top of the head of the 30S subunit, it contacts several helices of the 16S rRNA. In the 70S ribosome it contacts the 23S rRNA (bridge B1a) and protein L5 of the 50S subunit (bridge B1b), connecting the 2 subunits; these bridges are implicated in subunit movement. Contacts the tRNAs in the A and P-sites. This is Small ribosomal subunit protein uS13 from Chlamydia trachomatis serovar L2 (strain ATCC VR-902B / DSM 19102 / 434/Bu).